The following is a 554-amino-acid chain: MKSDIEICQTATLIRMKTIASNLGLHDDDITPQGRYKAKVNIDALKHLEDKPSGKLILVTAITPTPLGEGKTVTTIGLAQGLAKLGESVSACIRQPSMGPVFGVKGGAAGGGYSQVAPMEELNLHLTGDIHAITAAHNLASAAIDARIYHEQRLGYNIFSEKNDLPALRIDPTQVVWKRVMDHNDRALRMVTIGKNEDNKTINGYEREDGFDITAASELMAILALATDLQDLRQRIGRIVVAYNLDGLPITTEDLQVAGAMTVTMKFAINPTLMQTLEGVPTFVHSGPFANIAHGNSSIIADNIALKLTDYTVLVATLRGIKANSGLFPLSSGQSLPKALFVPNQEALIAGLDNLHWHIKNCAKYGLPVVVAINRFPEDTQEELDFLADWVTSQSSELNLDVAISEAFGKGGEGTRELAQKVLIACAQETEFTPLYTPDMSLLDKLTAVAIKGYGAERLELSEKAQQQLAMFEQLGYQHLSVCMAKTPASISTDGNIKGAPTDFIVPIRELRLCAGAGFVYALCGNVMTMPGLPEKPAFMNLDIDSNGNITGLS.

Residue 65 to 72 (TPLGEGKT) coordinates ATP.

It belongs to the formate--tetrahydrofolate ligase family.

The enzyme catalyses (6S)-5,6,7,8-tetrahydrofolate + formate + ATP = (6R)-10-formyltetrahydrofolate + ADP + phosphate. Its pathway is one-carbon metabolism; tetrahydrofolate interconversion. The polypeptide is Formate--tetrahydrofolate ligase (Aliivibrio salmonicida (strain LFI1238) (Vibrio salmonicida (strain LFI1238))).